Consider the following 208-residue polypeptide: Small ribosomal subunit protein uS4 (208 aa).

Positions 98–161 (RRLDNVVYRL…RKIPVLAEAQ (64 aa)) constitute an S4 RNA-binding domain.

It belongs to the universal ribosomal protein uS4 family. Part of the 30S ribosomal subunit. Contacts protein S5. The interaction surface between S4 and S5 is involved in control of translational fidelity.

One of the primary rRNA binding proteins, it binds directly to 16S rRNA where it nucleates assembly of the body of the 30S subunit. Its function is as follows. With S5 and S12 plays an important role in translational accuracy. This Desulfovibrio desulfuricans (strain ATCC 27774 / DSM 6949 / MB) protein is Small ribosomal subunit protein uS4.